The following is a 532-amino-acid chain: Monolignol oxidoreductase AtBBE-like 15 (532 aa).

Residues 1–27 form the signal peptide; the sequence is MAFAISKRNATLFLVTLLLISVPLSSS. Cysteines 36 and 100 form a disulfide. A glycan (N-linked (GlcNAc...) asparagine) is linked at Asn-57. An FAD-binding PCMH-type domain is found at 76-254; the sequence is TPSNPKPVFI…LAWKIKLVPV (179 aa). The 6-(S-cysteinyl)-8alpha-(pros-histidyl)-FAD (His-Cys) cross-link spans 115–179; it reads HDYEGLSFVA…QTHGFPAGLC (65 aa). Asn-306 and Asn-431 each carry an N-linked (GlcNAc...) asparagine glycan.

It belongs to the oxygen-dependent FAD-linked oxidoreductase family. The cofactor is FAD. The FAD cofactor is bound via a bicovalent 6-S-cysteinyl, 8alpha-N1-histidyl FAD linkage. As to expression, expressed in sepals and stamen.

The protein localises to the secreted. It localises to the cell wall. The catalysed reaction is (E)-4-coumaroyl alcohol + A = (E)-4-coumaraldehyde + AH2. It carries out the reaction (E)-coniferol + A = (E)-coniferaldehyde + AH2. The enzyme catalyses (E)-sinapyl alcohol + A = (E)-sinapaldehyde + AH2. It catalyses the reaction 4-O-(beta-D-glucosyl)-(E)-coniferol + A = 4-O-(beta-D-glucosyl)-4-(E)-coniferyl aldehyde + AH2. Functionally, required for endosperm development and polar nuclei fusion. Mediates oxidation of p-hydroxylated derivatives of cinnamyl alcohol (i.e. the monolignols p-coumaryl-, coniferyl-, and sinapyl alcohol) to their corresponding aldehydes. Can also use the beta-O-glycosylated form of coniferyl alcohol (coniferin) as substrate, but is much less efficient towards cinnamyl alcohol. The electron acceptor required for these reactions is not known, but does not seem to be dioxygen. The chain is Monolignol oxidoreductase AtBBE-like 15 from Arabidopsis thaliana (Mouse-ear cress).